The following is a 397-amino-acid chain: Tryptophan synthase beta chain (397 aa).

An N6-(pyridoxal phosphate)lysine modification is found at Lys87.

It belongs to the TrpB family. In terms of assembly, tetramer of two alpha and two beta chains. Pyridoxal 5'-phosphate is required as a cofactor.

It catalyses the reaction (1S,2R)-1-C-(indol-3-yl)glycerol 3-phosphate + L-serine = D-glyceraldehyde 3-phosphate + L-tryptophan + H2O. Its pathway is amino-acid biosynthesis; L-tryptophan biosynthesis; L-tryptophan from chorismate: step 5/5. Functionally, the beta subunit is responsible for the synthesis of L-tryptophan from indole and L-serine. This is Tryptophan synthase beta chain from Escherichia coli O127:H6 (strain E2348/69 / EPEC).